Reading from the N-terminus, the 156-residue chain is Ribosomal RNA large subunit methyltransferase H (156 aa).

Residues Leu-72, Gly-104, and 123–128 (LSEMTL) contribute to the S-adenosyl-L-methionine site.

It belongs to the RNA methyltransferase RlmH family. Homodimer.

It localises to the cytoplasm. The enzyme catalyses pseudouridine(1915) in 23S rRNA + S-adenosyl-L-methionine = N(3)-methylpseudouridine(1915) in 23S rRNA + S-adenosyl-L-homocysteine + H(+). Functionally, specifically methylates the pseudouridine at position 1915 (m3Psi1915) in 23S rRNA. The chain is Ribosomal RNA large subunit methyltransferase H from Syntrophotalea carbinolica (strain DSM 2380 / NBRC 103641 / GraBd1) (Pelobacter carbinolicus).